Consider the following 103-residue polypeptide: Putative ribosomal RNA-processing protein 7 homolog B (103 aa).

A compositionally biased stretch (basic and acidic residues) spans 1 to 19 (MEAYDQKIAEEEAKAKEEE). The tract at residues 1–25 (MEAYDQKIAEEEAKAKEEEGVPDEE) is disordered. Residues 71 to 100 (ESKMEHLAQLRKKFEEDKQRIELLRAQRKF) are a coiled coil.

The protein belongs to the RRP7 family.

The sequence is that of Putative ribosomal RNA-processing protein 7 homolog B from Homo sapiens (Human).